The following is a 489-amino-acid chain: Glucose-6-phosphate 1-dehydrogenase (489 aa).

The NADP(+) site is built by R50 and K151. 4 residues coordinate substrate: H181, K185, E219, and D238. H243 serves as the catalytic Proton acceptor. Residues K341 and K346 each coordinate substrate.

It belongs to the glucose-6-phosphate dehydrogenase family. Homodimer.

It catalyses the reaction D-glucose 6-phosphate + NADP(+) = 6-phospho-D-glucono-1,5-lactone + NADPH + H(+). Its pathway is carbohydrate degradation; pentose phosphate pathway; D-ribulose 5-phosphate from D-glucose 6-phosphate (oxidative stage): step 1/3. In terms of biological role, catalyzes the oxidation of glucose 6-phosphate to 6-phosphogluconolactone. This chain is Glucose-6-phosphate 1-dehydrogenase, found in Gluconobacter oxydans (strain 621H) (Gluconobacter suboxydans).